Consider the following 217-residue polypeptide: 2-phospho-L-lactate guanylyltransferase (217 aa).

The protein belongs to the CofC family. In terms of assembly, homodimer.

The enzyme catalyses (2S)-2-phospholactate + GTP + H(+) = (2S)-lactyl-2-diphospho-5'-guanosine + diphosphate. It functions in the pathway cofactor biosynthesis; coenzyme F420 biosynthesis. Its function is as follows. Guanylyltransferase that catalyzes the activation of (2S)-2-phospholactate (2-PL) as (2S)-lactyl-2-diphospho-5'-guanosine, via the condensation of 2-PL with GTP. It is involved in the biosynthesis of coenzyme F420, a hydride carrier cofactor. The sequence is that of 2-phospho-L-lactate guanylyltransferase from Halorubrum lacusprofundi (strain ATCC 49239 / DSM 5036 / JCM 8891 / ACAM 34).